The primary structure comprises 234 residues: Small ribosomal subunit protein uS3 (234 aa).

The region spanning 39 to 107 (VRKFLNKELA…PAQINIAEVK (69 aa)) is the KH type-2 domain.

Belongs to the universal ribosomal protein uS3 family. In terms of assembly, part of the 30S ribosomal subunit. Forms a tight complex with proteins S10 and S14.

In terms of biological role, binds the lower part of the 30S subunit head. Binds mRNA in the 70S ribosome, positioning it for translation. In Haemophilus ducreyi (strain 35000HP / ATCC 700724), this protein is Small ribosomal subunit protein uS3.